The primary structure comprises 634 residues: Phototropic-responsive NPH3 family protein NPY2 (634 aa).

Positions 29–97 constitute a BTB domain; that stretch reads SDISVDVEGS…CYGMTVTLSA (69 aa). The region spanning 207–488 is the NPH3 domain; the sequence is DWWVEDLCEL…VQVLFFEQVR (282 aa). Tyr429 bears the Phosphotyrosine mark. 2 disordered regions span residues 492–517 and 584–634; these read SSGS…YGSS and QLQS…VSVS. Residues 588–602 are compositionally biased toward gly residues; it reads KGGGEKNNGGGGGGS. Over residues 619–634 the composition is skewed to polar residues; sequence KTATPSRNLTRRVSVS.

This sequence belongs to the NPH3 family. Specifically expressed in the hypophysis and the root meristems in the embryos. Highly expressed in primary root tips and radicles.

It localises to the cell membrane. It is found in the cytoplasm. The protein resides in the cytosol. It functions in the pathway protein modification; protein ubiquitination. Functionally, may act as a substrate-specific adapter of an E3 ubiquitin-protein ligase complex (CUL3-RBX1-BTB) which mediates the ubiquitination and subsequent proteasomal degradation of target proteins. Plays an essential role in auxin-mediated organogenesis and in root gravitropic responses through the control of PIN proteins (e.g. PIN1 and PIN2) polarity in the root tip endodermal cell layer and in shoot epidermis. Recruited to the plasma membrane by PINs (e.g. PIN1 and PIN2) and, in concert with AGC kinases-mediated (e.g. D6PK and PID) PINs phosphorylation, maintains their polarity through limiting lateral diffusion-based escape. The chain is Phototropic-responsive NPH3 family protein NPY2 from Arabidopsis thaliana (Mouse-ear cress).